The sequence spans 385 residues: Mannitol-1-phosphate 5-dehydrogenase (385 aa).

NAD(+) is bound at residue 4 to 15 (AVHFGAGNIGRG).

It belongs to the mannitol dehydrogenase family.

It catalyses the reaction D-mannitol 1-phosphate + NAD(+) = beta-D-fructose 6-phosphate + NADH + H(+). The sequence is that of Mannitol-1-phosphate 5-dehydrogenase from Lactococcus lactis subsp. lactis (strain IL1403) (Streptococcus lactis).